Consider the following 610-residue polypeptide: Propanediol dehydratase-reactivating factor large subunit (610 aa).

11-13 is an ATP binding site; that stretch reads NSS. 3 residues coordinate Mg(2+): threonine 105, aspartate 166, and aspartate 183. ATP is bound by residues 459–462, 557–558, and arginine 591; these read EEIK and GS.

This sequence belongs to the DdrA/PduG family. Forms a heterotetramer PduG(2)/PduH(2). The cofactor is Mg(2+).

It is found in the bacterial microcompartment. It carries out the reaction ATP + H2O = ADP + phosphate + H(+). It participates in polyol metabolism; 1,2-propanediol degradation. Functionally, large subunit of the propanediol dehydratase-reactivating factor (DDR), which reactivates suicidally inhibited adenosylcobalamin-dependent propanediol dehydratase (diol dehydratase, DDH) found in the bacterial microcompartment (BMC) dedicated to 1,2-propanediol (1,2-PD) degradation. Reactivates inactivated DDH in the presence of ATP, Mg(2+) and free adenosylcobalamin (AdoCbl), by mediating the exchange of the tightly bound damaged cofactor AdoCbl for a free intact one. This subunit contains the adenosine nucleotide binding site. Expression of a cosmid containing the full 21-gene pdu operon in E.coli allows E.coli to grow on 1,2-propanediol (1,2-PD) with the appearance of bacterial microcompartments (BMC) in its cytoplasm. In terms of biological role, the 1,2-PD-specific bacterial microcompartment (BMC) concentrates low levels of 1,2-PD catabolic enzymes, concentrates volatile reaction intermediates thus enhancing pathway flux and keeps the level of toxic, mutagenic propionaldehyde low. The sequence is that of Propanediol dehydratase-reactivating factor large subunit from Citrobacter freundii.